The following is a 65-amino-acid chain: Large ribosomal subunit protein uL29 (65 aa).

This sequence belongs to the universal ribosomal protein uL29 family.

In Buchnera aphidicola subsp. Baizongia pistaciae (strain Bp), this protein is Large ribosomal subunit protein uL29.